The chain runs to 175 residues: Large ribosomal subunit protein uL15 (175 aa).

Basic and acidic residues predominate over residues 1 to 13; sequence MTIKLNELRDNNG. 2 disordered regions span residues 1–44 and 150–175; these read MTIK…KARS and VELPEARPEGDGKKATRKAEAAAKNA. Gly residues predominate over residues 23–37; that stretch reads RGIGSGKGKTAGRGQ.

This sequence belongs to the universal ribosomal protein uL15 family. Part of the 50S ribosomal subunit.

Its function is as follows. Binds to the 23S rRNA. In Sphingopyxis alaskensis (strain DSM 13593 / LMG 18877 / RB2256) (Sphingomonas alaskensis), this protein is Large ribosomal subunit protein uL15.